The following is a 401-amino-acid chain: Nicotinate phosphoribosyltransferase (401 aa).

His221 bears the Phosphohistidine; by autocatalysis mark.

The protein belongs to the NAPRTase family. Transiently phosphorylated on a His residue during the reaction cycle. Phosphorylation strongly increases the affinity for substrates and increases the rate of nicotinate D-ribonucleotide production. Dephosphorylation regenerates the low-affinity form of the enzyme, leading to product release.

The enzyme catalyses nicotinate + 5-phospho-alpha-D-ribose 1-diphosphate + ATP + H2O = nicotinate beta-D-ribonucleotide + ADP + phosphate + diphosphate. It functions in the pathway cofactor biosynthesis; NAD(+) biosynthesis; nicotinate D-ribonucleotide from nicotinate: step 1/1. Its function is as follows. Catalyzes the synthesis of beta-nicotinate D-ribonucleotide from nicotinate and 5-phospho-D-ribose 1-phosphate at the expense of ATP. The protein is Nicotinate phosphoribosyltransferase of Yersinia pseudotuberculosis serotype O:1b (strain IP 31758).